We begin with the raw amino-acid sequence, 276 residues long: Protein G1 (276 aa).

2 disordered regions span residues 1 to 30 and 178 to 213; these read MSSS…SQKR and SYHK…ATAP. Over residues 21–30 the composition is skewed to basic and acidic residues; it reads RPSRYESQKR. In terms of domain architecture, ALOG spans 24 to 183; sequence RYESQKRRDW…ARGISYHKKK (160 aa). Positions 178 to 187 are enriched in basic residues; that stretch reads SYHKKKKRRG. Residues 181–185 carry the Nuclear localization signal motif; that stretch reads KKKKR. Residues 189–202 are compositionally biased toward gly residues; it reads NMNGARGGGGGGAR. Residues 203–213 are compositionally biased toward low complexity; it reads AGVNDGDATAP.

This sequence belongs to the plant homeotic and developmental regulators ALOG protein family. Expressed at the empty glumes of immature spikelets, which are lemmas of the sterile florets located at the lateral side of the spikelet, throughout their development.

The protein resides in the nucleus. Its function is as follows. Probable transcription regulator that acts as a developmental regulator by promoting cell growth in response to light. Transcription regulator that restrains empty glumes growth, lemmas of the sterile florets located at the lateral side of the rice spikelet, to maintain their small size, probably by repressing lemma identity via transcription regulation. The polypeptide is Protein G1 (G1) (Oryza sativa subsp. japonica (Rice)).